A 584-amino-acid chain; its full sequence is MNKLYIGNLGENVSPLDLESLFKDSKIPFSGQFLVKTGYAFVDCPDESWAMKAIEALSGKVELHGKLIEVEHSVPKRQRSRKLQIRNIPPHLQWEVLDSLLAQYGTVENCEQVNTDTETAVVNVTYGNKDQARQAIEKLNGFQLENYSLKVAYIPDEMAAQQPPQQHPQGRRGFGQRGPPRQGSPSATTRQKPQSDVPLRMLVPTQFVGAIIGKEGATIRNITKQTQSKIDIHRKENAGAAEKPITIHSTPEGCSTACKIIMEIMQKEAQDTKFTEEIPLKILAHNNFVGRLIGKEGRNLKKIEQDTDTKITISPLQDLTLYNPERTITVKGSIETCAKAEEEIMKKIRESYENDIAAMNLQAHLIPGLNLNALGLFPPSSSGIPPPAVSVASAAAAASYPPFGQQPESETVHLFIPALAVGAIIGKQGQHIKQLSRFAGASIKIAPAEGPDAKLRMVIITGPPEAQFKAQGRIYGKLKEENFFGPKEEVKLEAHIKVPSYAAGRVIGKGGKTVNELQNLTSAEVVVPRDQTPDENDQVVVKITGHFYACQLAQRKIQEILAQVRRQQQQQKTLQSGQPQPRRK.

RRM domains follow at residues 2-75 and 81-156; these read NKLY…HSVP and RKLQ…YIPD. Residues 160-199 are disordered; it reads AQQPPQQHPQGRRGFGQRGPPRQGSPSATTRQKPQSDVPL. Positions 184 to 194 are enriched in polar residues; it reads SPSATTRQKPQ. KH domains are found at residues 196–261, 277–344, 409–474, and 491–557; these read DVPL…CKII, EIPL…EEEI, SETV…QGRI, and KLEA…QRKI.

The protein belongs to the RRM IMP/VICKZ family. Homodimer and multimer.

It localises to the cytoplasm. The protein resides in the nucleus. Its subcellular location is the P-body. The protein localises to the stress granule. RNA-binding factor that may recruit target transcripts to cytoplasmic protein-RNA complexes (mRNPs). This transcript 'caging' into mRNPs allows mRNA transport and transient storage. It also modulates the rate and location at which target transcripts encounter the translational apparatus and shields them from endonuclease attacks or microRNA-mediated degradation. Preferentially binds to N6-methyladenosine (m6A)-containing mRNAs and increases their stability. The polypeptide is Insulin-like growth factor 2 mRNA-binding protein 3 (IGF2BP3) (Gallus gallus (Chicken)).